We begin with the raw amino-acid sequence, 376 residues long: MYG1 exonuclease (376 aa).

A mitochondrion-targeting transit peptide spans 1–47 (MGHRFLRGLLTLLLPPPPLYTRHRMLGPESVPPPKRSRSKLMAPPRI). The residue at position 120 (Ser-120) is a Phosphoserine. 2 positions are modified to N6-acetyllysine: Lys-267 and Lys-273.

This sequence belongs to the MYG1 family. In terms of tissue distribution, ubiquitously expressed, with highest levels in testis.

The protein localises to the nucleus. It localises to the nucleoplasm. Its subcellular location is the mitochondrion matrix. The protein resides in the nucleolus. In terms of biological role, 3'-5' RNA exonuclease which cleaves in situ on specific transcripts in both nucleus and mitochondrion. Involved in regulating spatially segregated organellar RNA processing, acts as a coordinator of nucleo-mitochondrial crosstalk. In nucleolus, processes pre-ribosomal RNA involved in ribosome assembly and alters cytoplasmic translation. In mitochondrial matrix, processes 3'-termini of the mito-ribosomal and messenger RNAs and controls translation of mitochondrial proteins. This Homo sapiens (Human) protein is MYG1 exonuclease.